Consider the following 162-residue polypeptide: tRNA-specific adenosine deaminase (162 aa).

A CMP/dCMP-type deaminase domain is found at 3–115 (DSDKYFMKCA…KNLQKYICCK (113 aa)). His-54 is a Zn(2+) binding site. The active-site Proton donor is Glu-56. Zn(2+) contacts are provided by Cys-84 and Cys-87.

The protein belongs to the cytidine and deoxycytidylate deaminase family. In terms of assembly, homodimer. Zn(2+) serves as cofactor.

It carries out the reaction adenosine(34) in tRNA + H2O + H(+) = inosine(34) in tRNA + NH4(+). Its function is as follows. Catalyzes the deamination of adenosine to inosine at the wobble position 34 of tRNA(Arg2). In Buchnera aphidicola subsp. Baizongia pistaciae (strain Bp), this protein is tRNA-specific adenosine deaminase.